The primary structure comprises 280 residues: Phosphatidylserine decarboxylase proenzyme (280 aa).

Residues Asp88, His145, and Ser248 each act as charge relay system; for autoendoproteolytic cleavage activity in the active site. The active-site Schiff-base intermediate with substrate; via pyruvic acid; for decarboxylase activity is Ser248. Residue Ser248 is modified to Pyruvic acid (Ser); by autocatalysis.

Belongs to the phosphatidylserine decarboxylase family. PSD-B subfamily. Prokaryotic type I sub-subfamily. In terms of assembly, heterodimer of a large membrane-associated beta subunit and a small pyruvoyl-containing alpha subunit. The cofactor is pyruvate. In terms of processing, is synthesized initially as an inactive proenzyme. Formation of the active enzyme involves a self-maturation process in which the active site pyruvoyl group is generated from an internal serine residue via an autocatalytic post-translational modification. Two non-identical subunits are generated from the proenzyme in this reaction, and the pyruvate is formed at the N-terminus of the alpha chain, which is derived from the carboxyl end of the proenzyme. The autoendoproteolytic cleavage occurs by a canonical serine protease mechanism, in which the side chain hydroxyl group of the serine supplies its oxygen atom to form the C-terminus of the beta chain, while the remainder of the serine residue undergoes an oxidative deamination to produce ammonia and the pyruvoyl prosthetic group on the alpha chain. During this reaction, the Ser that is part of the protease active site of the proenzyme becomes the pyruvoyl prosthetic group, which constitutes an essential element of the active site of the mature decarboxylase.

It localises to the cell membrane. It catalyses the reaction a 1,2-diacyl-sn-glycero-3-phospho-L-serine + H(+) = a 1,2-diacyl-sn-glycero-3-phosphoethanolamine + CO2. It functions in the pathway phospholipid metabolism; phosphatidylethanolamine biosynthesis; phosphatidylethanolamine from CDP-diacylglycerol: step 2/2. Functionally, catalyzes the formation of phosphatidylethanolamine (PtdEtn) from phosphatidylserine (PtdSer). The protein is Phosphatidylserine decarboxylase proenzyme of Methylobacillus flagellatus (strain ATCC 51484 / DSM 6875 / VKM B-1610 / KT).